The chain runs to 305 residues: Acetyl-coenzyme A carboxylase carboxyl transferase subunit beta (305 aa).

Residues 25–294 (VWTKCDSCGQ…PGNDDVEIRS (270 aa)) enclose the CoA carboxyltransferase N-terminal domain. Zn(2+)-binding residues include C29, C32, C48, and C51. The C4-type zinc-finger motif lies at 29–51 (CDSCGQVLYRAELERNLGVCPKC). Residues 281–305 (NHPEPGNDDVEIRSDAPSESSQDDA) form a disordered region.

This sequence belongs to the AccD/PCCB family. As to quaternary structure, acetyl-CoA carboxylase is a heterohexamer composed of biotin carboxyl carrier protein (AccB), biotin carboxylase (AccC) and two subunits each of ACCase subunit alpha (AccA) and ACCase subunit beta (AccD). It depends on Zn(2+) as a cofactor.

The protein resides in the cytoplasm. The catalysed reaction is N(6)-carboxybiotinyl-L-lysyl-[protein] + acetyl-CoA = N(6)-biotinyl-L-lysyl-[protein] + malonyl-CoA. It participates in lipid metabolism; malonyl-CoA biosynthesis; malonyl-CoA from acetyl-CoA: step 1/1. Functionally, component of the acetyl coenzyme A carboxylase (ACC) complex. Biotin carboxylase (BC) catalyzes the carboxylation of biotin on its carrier protein (BCCP) and then the CO(2) group is transferred by the transcarboxylase to acetyl-CoA to form malonyl-CoA. In Pectobacterium atrosepticum (strain SCRI 1043 / ATCC BAA-672) (Erwinia carotovora subsp. atroseptica), this protein is Acetyl-coenzyme A carboxylase carboxyl transferase subunit beta.